The sequence spans 465 residues: Soluble pyridine nucleotide transhydrogenase (465 aa).

36–45 (ERYDNVGGGC) provides a ligand contact to FAD.

This sequence belongs to the class-I pyridine nucleotide-disulfide oxidoreductase family. It depends on FAD as a cofactor.

The protein localises to the cytoplasm. The catalysed reaction is NAD(+) + NADPH = NADH + NADP(+). Conversion of NADPH, generated by peripheral catabolic pathways, to NADH, which can enter the respiratory chain for energy generation. This is Soluble pyridine nucleotide transhydrogenase from Sodalis glossinidius (strain morsitans).